Consider the following 277-residue polypeptide: Lectin 1 (277 aa).

A signal peptide spans 1–30; the sequence is MSFSSSNFYVILSISLTVFILLFNINKVNS. N-linked (GlcNAc...) asparagine glycosylation is present at N143. The Mn(2+) site is built by E152 and D154. Ca(2+)-binding residues include D154, N158, and D161. 2 residues coordinate Mn(2+): D161 and H167. N-linked (GlcNAc...) asparagine glycosylation is present at N269.

It belongs to the leguminous lectin family.

Lectin that may be involved in a cell recognition process. The sequence is that of Lectin 1 (LEC1) from Medicago truncatula (Barrel medic).